The primary structure comprises 430 residues: MPDDYGTQIAEITAREILDSRGRPTVEAEVHLEDGSVGLAQVPSGASTGTFEAHELRDDDPSRYGGKGVQKAVENVSAIEDALIGLSALDQEGLDKAMIALDGTPNKKNLGANAILAVSLATAHAAATSLNLPLYRYLGGPLANVLPVPMMNVINGGAHADNNVDFQEFMIMPVGAPSFKEALRWGAEVFHALAKVLKDKGLATGVGDEGGFAPNLGSNKEALELLLTAIEAAGYKPGEQVALAMDVASSEFYKNGLYTCDGVSHEPAGMIGILADLVSQYPIVSIEDGLQEDDWSNWKTLTQQLGSTVQLVGDDLFVTNPDRLQSGIEQGVGNAVLIKLNQIGTLTETLRTIDLATRSGYRSVISHRSGETEDTTIADLAVATRAGQIKTGSLSRSERIAKYNRLLRIEAALGENALYAGAIGLGPKGR.

(2R)-2-phosphoglycerate is bound at residue Q167. The active-site Proton donor is the E209. Residues D246, E287, and D314 each coordinate Mg(2+). (2R)-2-phosphoglycerate contacts are provided by K339, R368, and S369. K339 (proton acceptor) is an active-site residue.

This sequence belongs to the enolase family. The cofactor is Mg(2+).

It is found in the cytoplasm. It localises to the secreted. The protein localises to the cell surface. It carries out the reaction (2R)-2-phosphoglycerate = phosphoenolpyruvate + H2O. It functions in the pathway carbohydrate degradation; glycolysis; pyruvate from D-glyceraldehyde 3-phosphate: step 4/5. In terms of biological role, catalyzes the reversible conversion of 2-phosphoglycerate (2-PG) into phosphoenolpyruvate (PEP). It is essential for the degradation of carbohydrates via glycolysis. This chain is Enolase, found in Synechococcus sp. (strain ATCC 27144 / PCC 6301 / SAUG 1402/1) (Anacystis nidulans).